Here is a 230-residue protein sequence, read N- to C-terminus: Response regulator MprA (230 aa).

Residues 4 to 118 (RILVVDDDRA…ELLARMRALL (115 aa)) form the Response regulatory domain. At Asp48 the chain carries 4-aspartylphosphate. Positions 129–227 (SMAMRFSDLT…VRGVGYVLRE (99 aa)) form a DNA-binding region, ompR/PhoB-type.

Phosphorylated and dephosphorylated by MprB.

It is found in the cytoplasm. Member of the two-component regulatory system MprB/MprA which contributes to maintaining a balance among several systems involved in stress resistance and is required for establishment and maintenance of persistent infection in the host. Functions as a transcriptional regulator that recognizes a 19-bp nucleotide motif comprizing two loosely conserved 8-bp direct DNA-binding motif repeats separated by a 3-bp spacer region. This Mycobacterium tuberculosis (strain ATCC 25177 / H37Ra) protein is Response regulator MprA (mprA).